The sequence spans 78 residues: Large ribosomal subunit protein bL28 (78 aa).

Belongs to the bacterial ribosomal protein bL28 family.

This Gloeothece citriformis (strain PCC 7424) (Cyanothece sp. (strain PCC 7424)) protein is Large ribosomal subunit protein bL28.